Reading from the N-terminus, the 89-residue chain is Small ribosomal subunit protein uS15 (89 aa).

It belongs to the universal ribosomal protein uS15 family. As to quaternary structure, part of the 30S ribosomal subunit. Forms a bridge to the 50S subunit in the 70S ribosome, contacting the 23S rRNA.

In terms of biological role, one of the primary rRNA binding proteins, it binds directly to 16S rRNA where it helps nucleate assembly of the platform of the 30S subunit by binding and bridging several RNA helices of the 16S rRNA. Forms an intersubunit bridge (bridge B4) with the 23S rRNA of the 50S subunit in the ribosome. This is Small ribosomal subunit protein uS15 from Hyphomonas neptunium (strain ATCC 15444).